The sequence spans 344 residues: MQLEIKVALNFIISYLYNKLPRRRADLFGEELERLLKKKYEGHWYPEKPLKGSGFRCVHIGEMVDPVVELAAKRSGLAVEDVRANVPEELSVWIDPFEVSYQIGEKGAVKVLYLDDSEGCGAPELDKEIKSSFNPDAQVFVPIGSQDSSLSNSPSPSFGQSPSPTFIPRSAQPITFTTASFAATKFGSTKMKKGGGAASGGGVASSGAGGQQPPQQPRMARSPTNSLLKHKSLSLSMHSLNFITANPAPQSQLSPNAKEFVYNGGGSPSLFFDAADGQGSGTPGPFGGSGAGTCNSSSFDMAQVFGGGANSLFLEKTPFVEGLSYNLNTMQYPSQQFQPVVLAN.

Disordered stretches follow at residues 144–169 (GSQDSSLSNSPSPSFGQSPSPTFIPR) and 191–225 (MKKGGGAASGGGVASSGAGGQQPPQQPRMARSPTN). Over residues 145–164 (SQDSSLSNSPSPSFGQSPSP) the composition is skewed to low complexity. The span at 194-210 (GGGAASGGGVASSGAGG) shows a compositional bias: gly residues. Residues 211–225 (QQPPQQPRMARSPTN) are compositionally biased toward low complexity. S254 is subject to Phosphoserine.

The protein belongs to the BTG family. Associates with CAF1. In terms of tissue distribution, ubiquitous.

It is found in the cytoplasm. Functionally, anti-proliferative protein inhibits cell cycle progression from the G0/G1 to S phases. This chain is Protein Tob2 (TOB2), found in Homo sapiens (Human).